A 150-amino-acid chain; its full sequence is Lymphocyte antigen 6 complex locus protein G5c (150 aa).

An N-terminal signal peptide occupies residues 1-41; it reads MRFMAGPAGSQSLGPLCFHSSPQALYTVLLIVLVMMSLVFG. Residues 60-150 form the UPAR/Ly6 domain; the sequence is LRCYRCLLET…DPQNRGLYTP (91 aa). Intrachain disulfides connect Cys-62-Cys-89, Cys-65-Cys-74, Cys-81-Cys-107, and Cys-134-Cys-139. Asn-96 carries N-linked (GlcNAc...) asparagine glycosylation.

Forms oligomers. N-glycosylated. In terms of tissue distribution, detected in T-cell lines and fetal and adult lung.

It localises to the secreted. Its function is as follows. May have a role in hematopoietic cell differentiation. The protein is Lymphocyte antigen 6 complex locus protein G5c (LY6G5C) of Homo sapiens (Human).